The chain runs to 484 residues: AMP nucleosidase (484 aa).

It belongs to the AMP nucleosidase family.

It carries out the reaction AMP + H2O = adenine + D-ribose 5-phosphate. Its function is as follows. Catalyzes the hydrolysis of the N-glycosidic bond of AMP to form adenine and ribose 5-phosphate. Involved in regulation of AMP concentrations. The sequence is that of AMP nucleosidase from Escherichia coli O157:H7.